Consider the following 364-residue polypeptide: Paraneoplastic antigen Ma2 homolog (364 aa).

Ala2 carries the post-translational modification N-acetylalanine. Residues 335 to 353 are compositionally biased toward acidic residues; it reads EEEEASFENESIEEPEEGD. The tract at residues 335–364 is disordered; that stretch reads EEEEASFENESIEEPEEGDGYGRWNHEGDD.

The protein belongs to the PNMA family.

It is found in the nucleus. Its subcellular location is the nucleolus. The polypeptide is Paraneoplastic antigen Ma2 homolog (PNMA2) (Pongo abelii (Sumatran orangutan)).